The chain runs to 1550 residues: Cellulose synthase 1 (1550 aa).

The interval 1 to 741 (MPEVRSSTQS…KERVLKGTVK (741 aa)) is catalytic. A run of 3 helical transmembrane segments spans residues 26 to 46 (GAGL…TSVT), 47 to 67 (LPPE…FIVG), and 106 to 126 (GLLG…LFLS). Positions 147-240 (EWPTVDIFVP…YILIFDCDHV (94 aa)) are catalytic subdomain A. The active site involves aspartate 189. Positions 236 and 238 each coordinate substrate. Residues 317–377 (TAIEQIGGFA…GQRVRWARGM (61 aa)) are catalytic subdomain B. Aspartate 333 is an active-site residue. The next 5 membrane-spanning stretches (helical) occupy residues 398–418 (LCYL…IFLS), 423–443 (FLFF…AYAI), 468–488 (VYET…LLSP), 507–527 (FDLG…GGLA), and 547–567 (LLNS…IAVG). The region spanning 572–647 (QKRNSHRIPA…PARIIRAGNG (76 aa)) is the PilZ domain. Disordered regions lie at residues 711–734 (SSPT…RKER) and 768–813 (APAH…QPLA). The interval 742–1550 (MVSLLALLTF…KQLEDERRKS (809 aa)) is cyclic di-GMP binding domain. The span at 768–796 (APAHQPEASDLPPLPALLPATSGAAQAGA) shows a compositional bias: low complexity. The chain crosses the membrane as a helical span at residues 1513–1533 (VLLVGLLGCILIVSVLARALA).

In the N-terminal section; belongs to the glycosyltransferase 2 family. It in the C-terminal section; belongs to the AcsB/BcsB family. Mg(2+) serves as cofactor.

The protein resides in the cell inner membrane. It catalyses the reaction [(1-&gt;4)-beta-D-glucosyl](n) + UDP-alpha-D-glucose = [(1-&gt;4)-beta-D-glucosyl](n+1) + UDP + H(+). Its pathway is glycan metabolism; bacterial cellulose biosynthesis. Activated by c-di-GMP. In terms of biological role, bifunctional protein comprised of a catalytic subunit and a regulatory subunit. The catalytic subunit of cellulose synthase polymerizes uridine 5'-diphosphate glucose to cellulose in a processive way. The thick cellulosic mats generated by this enzyme probably provide a specialized protective environment to the bacterium. The regulatory subunit binds bis-(3'-5') cyclic diguanylic acid (c-di-GMP). This Komagataeibacter xylinus (Gluconacetobacter xylinus) protein is Cellulose synthase 1 (acsAB).